Here is a 185-residue protein sequence, read N- to C-terminus: MTATASDDEAVTALALSAAKGNGRALEAFIKATQQDVWRFVAYLSDVGSADDLTQETFLRAIGAIPRFSARSSARTWLLAIARHVVADHIRHVRSRPRTTRGARPEHLIDGDRHARGFEDLVEVTTMIADLTTDQREALLLTQLLGLSYADAAAVCGCPVGTIRSRVARARDALLADAEPDDLTG.

Residues 52–65 carry the Polymerase core binding motif; sequence DLTQETFLRAIGAI. The segment at residues 149 to 168 is a DNA-binding region (H-T-H motif); that stretch reads YADAAAVCGCPVGTIRSRVA.

Belongs to the sigma-70 factor family. ECF subfamily.

In terms of biological role, sigma factors are initiation factors that promote the attachment of RNA polymerase to specific initiation sites and are then released. The sequence is that of Probable RNA polymerase sigma-C factor (sigC) from Mycobacterium bovis (strain ATCC BAA-935 / AF2122/97).